We begin with the raw amino-acid sequence, 475 residues long: MPSEIITLQLGQCGNQIGFEFWKRLCLEHGISPSGVLEDFANDGLDRKDVFFYQADDDHYIPRAVLLDLEPRVINTIMGSVYSKLYNPENVYLSKHGGGAGNNWASGYSQGEKLQEEVFDIIDREADGSDSLEGFILCHSIAGGTGSGMGSFIMERLADRYPKKLIQTFSVFPNQDEISDVVVQPYNSMLTLKRLTTAADSVVVLDNTALNRIACDRLHIQNPSFSQINNLVSTIMSVSTTTLRYPSYMNNNLIGLTAPLIPTPQLHFLMTGYTPLTSDSDIHTQQLVNVRKTTVLDVMRRLLQPKNMMVSTGPDKSNHHCYISILNIIQGEVDPTQVHKSLQRIRDRKMAQFIPWGPTSIQVALSRSSPYVQSNHRVSGLMLANHTSICSLFERALNQYDKLRKRGAFLDQFRREDIFKDDLNELDESRETVDCLVQEYEAATREDYMQFSVKRGNGPVDSKSEDSRSVTSAGS.

142-148 (AGGTGSG) is a binding site for GTP. The interval 453 to 475 (VKRGNGPVDSKSEDSRSVTSAGS) is disordered.

It belongs to the tubulin family. Interacts with Ote.

Its subcellular location is the cytoplasm. It localises to the cytoskeleton. It is found in the microtubule organizing center. The protein localises to the centrosome. The protein resides in the perinuclear region. In terms of biological role, tubulin is the major constituent of microtubules. The gamma chain is found at microtubule organizing centers (MTOC) such as the spindle poles or the centrosome, suggesting that it is involved in the minus-end nucleation of microtubule assembly. The sequence is that of Tubulin gamma-1 chain (gammaTub23C) from Drosophila melanogaster (Fruit fly).